Here is a 63-residue protein sequence, read N- to C-terminus: Prokaryotic ubiquitin-like protein UBact (63 aa).

The interval 1–63 (MSGRSTFGRF…SRRYRQRTGE (63 aa)) is disordered. The span at 17–50 (PWERKPGDDEGGPKRPKVERPDTNDLLKRMRRVD) shows a compositional bias: basic and acidic residues. Glutamate 63 participates in a covalent cross-link: Isoglutamyl lysine isopeptide (Glu-Lys) (interchain with K-? in acceptor proteins).

The protein belongs to the ubiquitin-like protein UBact family.

Functionally, may function as a protein modifier covalently attached to lysine residues of substrate proteins. This may serve to target the modified proteins for degradation by proteasomes. The polypeptide is Prokaryotic ubiquitin-like protein UBact (Handelsmanbacteria sp. (strain RIFCSPLOWO2_12_FULL_64_10)).